The primary structure comprises 526 residues: Vitamin B6 transporter bsu1 (526 aa).

Positions 1 to 53 are disordered; sequence MASKIASLFSPSETASKDQHENVAEDLELGTASSQSDGIHETNSEYDEKKREE. Positions 38–53 are enriched in basic and acidic residues; it reads GIHETNSEYDEKKREE. The next 12 helical transmembrane spans lie at 81–101, 118–138, 147–167, 173–192, 204–224, 238–257, 314–330, 349–366, 387–407, 413–432, 444–461, and 480–501; these read WSIV…SNGF, VATL…MFLG, KPVY…CALP, MIIS…TNVA, AGVP…GAPM, WLYY…ILII, LYNF…LTAI, YLSG…QPIQ, FTSA…FAFT, PWMS…GHNW, PLLS…SFIG, and WAVA…TFYF.

The protein belongs to the major facilitator superfamily. CAR1 family.

The protein localises to the membrane. Thiamine-regulated, high affinity import carrier of pyridoxine, pyridoxal and pyridoxamine. Also imports, but does not export, amiloride and so confers sensitivity. In Schizosaccharomyces pombe (strain 972 / ATCC 24843) (Fission yeast), this protein is Vitamin B6 transporter bsu1 (bsu1).